The sequence spans 204 residues: Sec-independent protein translocase protein TatB (204 aa).

Residues 1–21 (MFDIGFSELLLIFIVGLVVLG) form a helical membrane-spanning segment. Over residues 154–166 (VVSSVDSIQNGQS) the composition is skewed to polar residues. Residues 154 to 204 (VVSSVDSIQNGQSDLELDAQAEVDRQLAAMMDKYAPPDDVAENPISTEKTS) are disordered.

This sequence belongs to the TatB family. As to quaternary structure, the Tat system comprises two distinct complexes: a TatABC complex, containing multiple copies of TatA, TatB and TatC subunits, and a separate TatA complex, containing only TatA subunits. Substrates initially bind to the TatABC complex, which probably triggers association of the separate TatA complex to form the active translocon.

It localises to the cell inner membrane. Functionally, part of the twin-arginine translocation (Tat) system that transports large folded proteins containing a characteristic twin-arginine motif in their signal peptide across membranes. Together with TatC, TatB is part of a receptor directly interacting with Tat signal peptides. TatB may form an oligomeric binding site that transiently accommodates folded Tat precursor proteins before their translocation. The chain is Sec-independent protein translocase protein TatB from Mannheimia succiniciproducens (strain KCTC 0769BP / MBEL55E).